The sequence spans 56 residues: uncharacterized protein (56 aa).

4Fe-4S ferredoxin-type domains lie at 2–28 (VKID…NLIE) and 29–56 (HIIV…LEGE). [4Fe-4S] cluster is bound by residues cysteine 9, cysteine 12, cysteine 15, cysteine 19, cysteine 38, cysteine 41, cysteine 44, and cysteine 48.

[4Fe-4S] cluster is required as a cofactor.

In terms of biological role, ferredoxins are iron-sulfur proteins that transfer electrons in a wide variety of metabolic reactions. This is an uncharacterized protein from Methanocaldococcus jannaschii (strain ATCC 43067 / DSM 2661 / JAL-1 / JCM 10045 / NBRC 100440) (Methanococcus jannaschii).